The sequence spans 308 residues: Putative cathepsin L 3 (308 aa).

An N-terminal signal peptide occupies residues 1–21 (MKQFLTAAIVTLLMTAGYYHL). The propeptide at 22-110 (QEDDTNDFER…GASLPEVQLE (89 aa)) is activation peptide. 2 cysteine pairs are disulfide-bonded: Cys129–Cys170 and Cys254–Cys298. Active-site residues include His261 and Asn278.

It belongs to the peptidase C1 family.

The protein resides in the secreted. The enzyme catalyses Specificity close to that of papain. As compared to cathepsin B, cathepsin L exhibits higher activity toward protein substrates, but has little activity on Z-Arg-Arg-NHMec, and no peptidyl-dipeptidase activity.. In terms of biological role, may be involved in extracellular digestion. This chain is Putative cathepsin L 3, found in Paramecium tetraurelia.